A 219-amino-acid chain; its full sequence is Flagellin B4 (219 aa).

A propeptide spanning residues 1–5 (MHRKG) is cleaved from the precursor.

The protein belongs to the archaeal flagellin family.

Its subcellular location is the archaeal flagellum. In terms of biological role, flagellin is the subunit protein which polymerizes to form the filaments of archaeal flagella. This chain is Flagellin B4 (flaB4), found in Pyrococcus abyssi (strain GE5 / Orsay).